The chain runs to 31 residues: Sarcolipin (31 aa).

Residues 1–7 (MERSTQE) are Cytoplasmic-facing. The helical transmembrane segment at 8-26 (LFINFTVVLITVLLMWLLV) threads the bilayer. The Lumenal portion of the chain corresponds to 27 to 31 (RSYQY).

This sequence belongs to the sarcolipin family. In terms of assembly, homooligomer. Can also form heterooligomers with other sarcoplasmic/endoplasmic reticulum calcium ATPase (SERCA) regulators ARLN, ERLN, PLN and STRIT1/DWORF. Monomer. Interacts with calcium ATPase ATP2A1/SERCA1. Interacts as a monomer with ATP2A2/SERCA2; the interaction decreases ATP2A2 Ca(2+) affinity. Interacts with VMP1; VMP1 competes with PLN and SLN to prevent them from forming an inhibitory complex with ATP2A2.

It localises to the sarcoplasmic reticulum membrane. The protein resides in the endoplasmic reticulum membrane. Reversibly inhibits the activity of ATP2A1/SERCA1 and ATP2A2/SERCA2 in sarcoplasmic reticulum by decreasing the apparent affinity of the ATPase for Ca(2+). Also inhibits the activity of ATP2A3/SERCA3. Modulates calcium re-uptake during muscle relaxation and plays an important role in calcium homeostasis in muscle. Required for muscle-based, non-shivering thermogenesis. The sequence is that of Sarcolipin (Sln) from Rattus norvegicus (Rat).